A 1042-amino-acid polypeptide reads, in one-letter code: Exosome RNA helicase MTR4 (1042 aa).

Position 2 is an N-acetylalanine (alanine 2). A disordered region spans residues 16–74 (DSTTAAGTKKDKEKDKGKWKGPPGSADKAGKRFDGKLQSESTNNGKNKRDVDFEGTDEP). The segment covering 23 to 33 (TKKDKEKDKGK) has biased composition (basic and acidic residues). Residue lysine 24 forms a Glycyl lysine isopeptide (Lys-Gly) (interchain with G-Cter in SUMO2) linkage. Phosphoserine is present on serine 40. Positions 43-52 (KAGKRFDGKL) are enriched in basic and acidic residues. Residues lysine 51 and lysine 78 each carry the N6-acetyllysine modification. Residues isoleucine 139, 161–168 (AHTSAGKT), serine 164, glycine 166, lysine 167, and threonine 168 each bind ATP. The 157-residue stretch at 148-304 (IQCVDNNQSV…WICHLHKQPC (157 aa)) folds into the Helicase ATP-binding domain. The DEIH box motif lies at 252-255 (DEIH). A Glycyl lysine isopeptide (Lys-Gly) (interchain with G-Cter in SUMO2) cross-link involves residue lysine 358. The Helicase C-terminal domain maps to 405 to 577 (QMTKLDFNTD…NMVLNLLRVE (173 aa)). Residues lysine 684 and lysine 723 each participate in a glycyl lysine isopeptide (Lys-Gly) (interchain with G-Cter in SUMO2) cross-link.

The protein belongs to the helicase family. SKI2 subfamily. Component of a TRAMP-like complex, an ATP-dependent exosome regulatory complex consisting of a helicase (MTREX), an oligadenylate polymerase (TENT4B or TENT4A), and a substrate specific RNA-binding factor (ZCCHC7 or ZCCHC8). Several TRAMP-like complexes exist with specific compositions and are associated with nuclear, or nucleolar RNA exosomes. Identified in the spliceosome C complex. Component of the poly(A) tail exosome targeting (PAXT) complex made of PABPN1, ZFC3H1 and MTREX that directs a subset of long and polyadenylated poly(A) RNAs for exosomal degradation. Component of the nuclear exosome targeting (NEXT) complex composed of MTREX, ZCCHC8, and RBM7 that directs a subset of non-coding short-lived RNAs for exosomal degradation. Interacts with ZCCHC8; this interaction bridges the interaction between RBM7 and MTREX. Binds to ZFC3H1 and RBM7 in a RNase-insensitive manner. Interacts with EXOSC10; the interaction mediates the association of MTREX with nuclear RNA exosomes. Interacts with isoform 1 of NVL in an ATP-dependent manner; the interaction is required to associate NVL with nuclear RNA exosome. Interacts with WDR74; the interaction dissociation in a late stage of rRNA synthesis is required for appropriate maturation of pre-60S particles and depends on the ATPase activity of NVL. Interacts with MPHOSPH6. Interacts with the RNA cap-binding complex proteins NCBP1 and SRRT. Interacts with NRDE2; the interaction is direct and negatively regulates MTREX function in exosomal degradation by changing its conformation precluding interaction with ZFC3H1, the RNA cap-binding complex proteins NCBP1 and SRRT, and association with the exosome. Associates with the RNA exosome complex.

It is found in the nucleus. The protein resides in the nucleoplasm. It localises to the nucleolus. The protein localises to the nucleus speckle. It catalyses the reaction ATP + H2O = ADP + phosphate + H(+). Activated when MTREX is incorporated into NEXT complex an the nuclear RNA exosome complex. Catalyzes the ATP-dependent unwinding of RNA duplexes with a single-stranded 3' RNA extension. Central subunit of many protein complexes, namely TRAMP-like, nuclear exosome targeting (NEXT) and poly(A) tail exosome targeting (PAXT). NEXT functions as an RNA exosome cofactor that directs a subset of non-coding short-lived RNAs for exosomal degradation. NEXT is involved in surveillance and turnover of aberrant transcripts and non-coding RNAs. PAXT directs a subset of long and polyadenylated poly(A) RNAs for exosomal degradation. The RNA exosome is fundamental for the degradation of RNA in eukaryotic nuclei. Substrate targeting is facilitated by its cofactor ZCCHC8, which links to RNA-binding protein adapters. Associated with the RNA exosome complex and involved in the 3'-processing of the 7S pre-RNA to the mature 5.8S rRNA. May be involved in pre-mRNA splicing. In the context of NEXT complex can also in vitro unwind DNA:RNA heteroduplexes with a 3' poly (A) RNA tracking strand. Can promote unwinding and degradation of structured RNA substrates when associated with the nuclear exosome and its cofactors. Can displace a DNA strand while translocating on RNA to ultimately degrade the RNA within a DNA/RNA heteroduplex. Plays a role in DNA damage response. This chain is Exosome RNA helicase MTR4, found in Homo sapiens (Human).